The primary structure comprises 222 residues: Prolactin-3B1 (222 aa).

A signal peptide spans 1 to 31; that stretch reads MKLSLSQPCSFSGALLLLAVSNLLVWEKVTS. Disulfide bonds link Cys-82–Cys-197 and Cys-214–Cys-222.

The protein belongs to the somatotropin/prolactin family.

The protein localises to the secreted. The protein is Prolactin-3B1 (Prl3b1) of Mus musculus (Mouse).